We begin with the raw amino-acid sequence, 232 residues long: LexA repressor (232 aa).

Positions 35 to 55 (IREIGDAAGLQSTSSVAYQLK) form a DNA-binding region, H-T-H motif. Residues 61–85 (GFLRRDPNKPRAVDVRHLPETESRS) show a composition bias toward basic and acidic residues. A disordered region spans residues 61–104 (GFLRRDPNKPRAVDVRHLPETESRSSKAATQAKSKAPQAGVHDP). The span at 86-99 (SKAATQAKSKAPQA) shows a compositional bias: low complexity. Catalysis depends on for autocatalytic cleavage activity residues Ser-156 and Lys-193.

The protein belongs to the peptidase S24 family. Homodimer.

The catalysed reaction is Hydrolysis of Ala-|-Gly bond in repressor LexA.. Represses a number of genes involved in the response to DNA damage (SOS response), including recA and lexA. In the presence of single-stranded DNA, RecA interacts with LexA causing an autocatalytic cleavage which disrupts the DNA-binding part of LexA, leading to derepression of the SOS regulon and eventually DNA repair. This chain is LexA repressor, found in Corynebacterium glutamicum (strain ATCC 13032 / DSM 20300 / JCM 1318 / BCRC 11384 / CCUG 27702 / LMG 3730 / NBRC 12168 / NCIMB 10025 / NRRL B-2784 / 534).